The chain runs to 186 residues: Histone deacetylase complex subunit SAP25 (186 aa).

2 disordered regions span residues 1 to 25 (MSPL…PSCG) and 148 to 186 (EQTP…GTDT). 2 stretches are compositionally biased toward polar residues: residues 148–163 (EQTP…STSC) and 177–186 (GDQSCSGTDT).

As to quaternary structure, may be a component of the mSIN3A corepressor complex. Interacts with SIN3A and HDAC2. As to expression, widely expressed.

Its subcellular location is the nucleus. It is found in the cytoplasm. Its function is as follows. Involved in the transcriptional repression mediated by the mSIN3A but not the N-CoR corepressor complex. This is Histone deacetylase complex subunit SAP25 (Sap25) from Mus musculus (Mouse).